The sequence spans 258 residues: Ciliogenesis and planar polarity effector 2 (258 aa).

Residues 50–258 (SIDTASYKIF…LPNPPESAPE (209 aa)) form a small GTPase-like region. GTP-binding residues include Ser64, Gly65, Gly67, Lys68, Thr69, Ala70, Val82, His84, Thr87, Lys176, Asp178, and Ser206.

Belongs to the small GTPase superfamily. Rab family. As to quaternary structure, interacts with FUZ. Associates with the CPLANE (ciliogenesis and planar polarity effectors) complex via its interaction with FUZ.

It is found in the cytoplasm. The protein resides in the cytoskeleton. The protein localises to the cilium basal body. It localises to the microtubule organizing center. Its subcellular location is the centrosome. It is found in the centriole. In terms of biological role, required for efficient primary cilia initiation, regulating a late step in cilia initiation. Plays a role in the final maturation of the mother centriole and ciliary vesicle that allows extension of the ciliary axoneme. The sequence is that of Ciliogenesis and planar polarity effector 2 from Homo sapiens (Human).